The chain runs to 372 residues: Glutamate 5-kinase (372 aa).

Lysine 14 lines the ATP pocket. Substrate-binding residues include serine 54, aspartate 141, and asparagine 153. 173 to 174 (TD) contributes to the ATP binding site. In terms of domain architecture, PUA spans 280–358 (RGHVVIDAGA…GEIETVLGYM (79 aa)).

It belongs to the glutamate 5-kinase family.

The protein localises to the cytoplasm. It carries out the reaction L-glutamate + ATP = L-glutamyl 5-phosphate + ADP. The protein operates within amino-acid biosynthesis; L-proline biosynthesis; L-glutamate 5-semialdehyde from L-glutamate: step 1/2. Functionally, catalyzes the transfer of a phosphate group to glutamate to form L-glutamate 5-phosphate. In Burkholderia mallei (strain NCTC 10229), this protein is Glutamate 5-kinase.